A 1186-amino-acid polypeptide reads, in one-letter code: DNA excision repair protein ERCC-5 (1186 aa).

Residues 1–78 form an N-domain region; that stretch reads MGVQGLWKLL…RIRPIFVFDG (78 aa). Lysine 8 bears the N6-acetyllysine mark. Aspartate 30 is a Mg(2+) binding site. Residues 31 to 67 are DNA-binding; may bind to the undamaged single-strand DNA of the DNA repair bubble; it reads ISIWLNQALKGVRDRHGNSIENPHLLTLFHRLCKLLF. Aspartate 77 contributes to the Mg(2+) binding site. Residues 79 to 785 form a spacer region region; sequence DAPLLKKQTL…LRLFGIPYIQ (707 aa). Disordered stretches follow at residues 306–342, 354–385, 404–473, 510–533, and 667–724; these read ESLP…PPSP, GSSS…SISP, CAGD…SVPK, HSDA…TNSV, and QAEF…AEDS. Residues 325–336 are compositionally biased toward basic and acidic residues; sequence PCEKLKTEKEPD. Phosphoserine is present on serine 384. Over residues 454 to 472 the composition is skewed to basic and acidic residues; it reads AEEHVASTNEGREPTDSVP. Serine 705 is subject to Phosphoserine. Residues 786–881 form an I-domain region; that stretch reads APMEAEAQCA…VTAMEILNEF (96 aa). Glutamate 789, glutamate 791, aspartate 810, and aspartate 812 together coordinate Mg(2+). The interval 820–836 is DNA-binding; may bind to the undamaged single-strand DNA of the DNA repair bubble; that stretch reads HVYRNFFNKNKFVEYYQ. The DNA-binding; H2TH (helix-2turn-helix) motif which binds double-stranded DNA stretch occupies residues 848 to 880; the sequence is RNKLINLAYLLGSDYTEGIPTVGCVTAMEILNE. Aspartate 861 serves as a coordination point for Mg(2+). The DNA-binding; may bind double-stranded DNA stretch occupies residues 912–918; the sequence is TKVKKKL. The tract at residues 981–1009 is interaction with PCNA; sequence LKQLDAQQTQLRIDSFFRLAQQEKEDAKR. An interaction with ERCC6/CSB region spans residues 1011–1186; it reads KSQRLNRAVT…RRARGRKRKT (176 aa). Disordered regions lie at residues 1056–1081 and 1095–1186; these read QKRG…SKGK and ESSD…KRKT. The Nuclear localization signal 1 signature appears at 1057-1074; the sequence is KRGITNTLEESSSLKRKR. The span at 1124–1133 shows a compositional bias: polar residues; that stretch reads TSASDSQNSV. The Nuclear localization signal 2 signature appears at 1169-1186; that stretch reads FGKKRRKLRRARGRKRKT. A compositionally biased stretch (basic residues) spans 1169–1186; the sequence is FGKKRRKLRRARGRKRKT.

It belongs to the XPG/RAD2 endonuclease family. XPG subfamily. In terms of assembly, monomer. Homodimer. Component of the homologous recombination repair (HR) complex composed of ERCC5/XPG, BRCA2, PALB2, DSS1 and RAD51. Within the complex, interacts with BRCA2 and PALB2. Interacts with RNA polymerase II. Interacts (via C-terminus) with ERCC6/CSB; the interaction stimulates ERCC6/CSB binding to the DNA repair bubble and ERCC6/CSB ATPase activity. May form a complex composed of RNA polymerase II, ERCC6/CSB and ERCC5/XPG which associates with the DNA repair bubble during transcription-coupled nucleotide excision repair. Interacts with BRCA1; the interaction promotes the release of BRCA1 from DNA. Interacts with PCNA. Interacts with NTHL1; the interaction stimulates NTHL1 activity and NTHL1 binding to its DNA substrate. Mg(2+) serves as cofactor.

Its subcellular location is the nucleus. It is found in the chromosome. Its function is as follows. Single-stranded structure-specific DNA endonuclease involved in DNA excision repair. Makes the 3'incision in DNA nucleotide excision repair (NER). Binds and bends DNA repair bubble substrate and breaks base stacking at the single-strand/double-strand DNA junction of the DNA bubble. Plays a role in base excision repair (BER) by promoting the binding of DNA glycosylase NTHL1 to its substrate and increasing NTHL1 catalytic activity that removes oxidized pyrimidines from DNA. Involved in transcription-coupled nucleotide excision repair (TCR) which allows RNA polymerase II-blocking lesions to be rapidly removed from the transcribed strand of active genes. Functions during the initial step of TCR in cooperation with ERCC6/CSB to recognized stalled RNA polymerase II. Also, stimulates ERCC6/CSB binding to the DNA repair bubble and ERCC6/CSB ATPase activity. Required for DNA replication fork maintenance and preservation of genomic stability. Involved in homologous recombination repair (HRR) induced by DNA replication stress by recruiting RAD51, BRCA2, and PALB2 to the damaged DNA site. In TFIIH stimulates the 5'-3' helicase activity of XPD/ERCC2 and the DNA translocase activity of XPB/ERCC3. During HRR, binds to the replication fork with high specificity and stabilizes it. Also, acts upstream of HRR, to promote the release of BRCA1 from DNA. The chain is DNA excision repair protein ERCC-5 (ERCC5) from Homo sapiens (Human).